The primary structure comprises 143 residues: ATP synthase epsilon chain (143 aa).

This sequence belongs to the ATPase epsilon chain family. As to quaternary structure, F-type ATPases have 2 components, CF(1) - the catalytic core - and CF(0) - the membrane proton channel. CF(1) has five subunits: alpha(3), beta(3), gamma(1), delta(1), epsilon(1). CF(0) has three main subunits: a, b and c.

It is found in the cell membrane. Produces ATP from ADP in the presence of a proton gradient across the membrane. The sequence is that of ATP synthase epsilon chain from Lacticaseibacillus casei (strain BL23) (Lactobacillus casei).